We begin with the raw amino-acid sequence, 122 residues long: MIQPQTYLNVADNSGARKLMCIRILGGRQKQYGKIGDVIIAVVKDALPNMPLKKSEIVRAVIVRTRKGVNRNNGTSIRFDENAAVIINKEGNPRGTRIFGPVARELRERNFTKLVSLAPEVL.

The protein belongs to the universal ribosomal protein uL14 family. As to quaternary structure, part of the 50S ribosomal subunit.

The protein resides in the plastid. It is found in the chloroplast. Functionally, binds to 23S rRNA. The sequence is that of Large ribosomal subunit protein uL14c from Pleurastrum terricola (Filamentous green alga).